We begin with the raw amino-acid sequence, 783 residues long: Glucosidase YgjK (783 aa).

A signal peptide spans 1–22 (MKIKTILTPVTCALLISFSAHA). The segment at 24–254 (NADNYKNVIN…TTLYTTYSHL (231 aa)) is N-terminal domain. The linker stretch occupies residues 254-299 (LLTAQEVSKEQMQIRDILARPAFYLTASQQRWEEYLKKGLTNPDAT). Positions 300–783 (PEQTRVAVKA…MLYNDFFRKQ (484 aa)) are a domain. Residues D454, N456, N458, V460, and E462 each coordinate Ca(2+). D524 functions as the Proton donor in the catalytic mechanism. Residue E572 participates in Ca(2+) binding. E750 functions as the Proton acceptor in the catalytic mechanism.

It belongs to the glycosyl hydrolase 63 family.

Functionally, glucoside hydrolase that cleaves the alpha-1,3-glucosidic linkage in nigerose. Has very low activity towards maltooligosaccharides, soluble starch, nigerotriose, kojibiose and trehalose. This chain is Glucosidase YgjK (ygjK), found in Escherichia coli (strain K12).